A 225-amino-acid polypeptide reads, in one-letter code: Small ribosomal subunit protein uS3 (225 aa).

In terms of domain architecture, KH type-2 spans 38–106; sequence IRKFIQSRFS…PVNLNIIEVK (69 aa).

It belongs to the universal ribosomal protein uS3 family. As to quaternary structure, part of the 30S ribosomal subunit. Forms a tight complex with proteins S10 and S14.

Functionally, binds the lower part of the 30S subunit head. Binds mRNA in the 70S ribosome, positioning it for translation. This Leptospira borgpetersenii serovar Hardjo-bovis (strain JB197) protein is Small ribosomal subunit protein uS3.